The chain runs to 280 residues: Acyl-[acyl-carrier-protein]--UDP-N-acetylglucosamine O-acyltransferase (280 aa).

This sequence belongs to the transferase hexapeptide repeat family. LpxA subfamily. As to quaternary structure, homotrimer.

The protein localises to the cytoplasm. It carries out the reaction a (3R)-hydroxyacyl-[ACP] + UDP-N-acetyl-alpha-D-glucosamine = a UDP-3-O-[(3R)-3-hydroxyacyl]-N-acetyl-alpha-D-glucosamine + holo-[ACP]. It functions in the pathway glycolipid biosynthesis; lipid IV(A) biosynthesis; lipid IV(A) from (3R)-3-hydroxytetradecanoyl-[acyl-carrier-protein] and UDP-N-acetyl-alpha-D-glucosamine: step 1/6. Functionally, involved in the biosynthesis of lipid A, a phosphorylated glycolipid that anchors the lipopolysaccharide to the outer membrane of the cell. The protein is Acyl-[acyl-carrier-protein]--UDP-N-acetylglucosamine O-acyltransferase of Chlamydia trachomatis serovar L2 (strain ATCC VR-902B / DSM 19102 / 434/Bu).